A 602-amino-acid chain; its full sequence is Threonine--tRNA ligase (602 aa).

The interval 208 to 499 (DHRKLGTELK…LTEHCAGEFP (292 aa)) is catalytic. Residues Cys-300, His-351, and His-476 each coordinate Zn(2+).

The protein belongs to the class-II aminoacyl-tRNA synthetase family. Homodimer. The cofactor is Zn(2+).

It is found in the cytoplasm. It catalyses the reaction tRNA(Thr) + L-threonine + ATP = L-threonyl-tRNA(Thr) + AMP + diphosphate + H(+). Its function is as follows. Catalyzes the attachment of threonine to tRNA(Thr) in a two-step reaction: L-threonine is first activated by ATP to form Thr-AMP and then transferred to the acceptor end of tRNA(Thr). Also edits incorrectly charged L-seryl-tRNA(Thr). This chain is Threonine--tRNA ligase, found in Campylobacter jejuni subsp. jejuni serotype O:6 (strain 81116 / NCTC 11828).